The primary structure comprises 328 residues: DNA-directed RNA polymerase subunit alpha (328 aa).

Residues 1–231 are alpha N-terminal domain (alpha-NTD); it reads MIYQMQMPAK…EHVTFFADFS (231 aa). Residues 252-328 form an alpha C-terminal domain (alpha-CTD) region; the sequence is MRKLFNTKIE…MDITKYQMKG (77 aa).

The protein belongs to the RNA polymerase alpha chain family. Homodimer. The RNAP catalytic core consists of 2 alpha, 1 beta, 1 beta' and 1 omega subunit. When a sigma factor is associated with the core the holoenzyme is formed, which can initiate transcription.

The enzyme catalyses RNA(n) + a ribonucleoside 5'-triphosphate = RNA(n+1) + diphosphate. Functionally, DNA-dependent RNA polymerase catalyzes the transcription of DNA into RNA using the four ribonucleoside triphosphates as substrates. The chain is DNA-directed RNA polymerase subunit alpha from Chlorobium limicola (strain DSM 245 / NBRC 103803 / 6330).